A 138-amino-acid polypeptide reads, in one-letter code: Small ribosomal subunit protein uS11c (138 aa).

The disordered stretch occupies residues 1–22; sequence MAKAIPKISSRRNGRIGSRKGA. Residues 9–22 are compositionally biased toward basic residues; the sequence is SSRRNGRIGSRKGA.

This sequence belongs to the universal ribosomal protein uS11 family. In terms of assembly, part of the 30S ribosomal subunit.

The protein resides in the plastid. It is found in the chloroplast. This Nicotiana tomentosiformis (Tobacco) protein is Small ribosomal subunit protein uS11c.